A 174-amino-acid polypeptide reads, in one-letter code: uncharacterized protein (174 aa).

This is an uncharacterized protein from Saccharomyces cerevisiae (strain ATCC 204508 / S288c) (Baker's yeast).